A 430-amino-acid polypeptide reads, in one-letter code: Replication factor C large subunit (430 aa).

75-82 (GPPGTGKT) is a binding site for ATP.

Belongs to the activator 1 small subunits family. RfcL subfamily. As to quaternary structure, heteromultimer composed of small subunits (RfcS) and large subunits (RfcL).

Functionally, part of the RFC clamp loader complex which loads the PCNA sliding clamp onto DNA. This Nanoarchaeum equitans (strain Kin4-M) protein is Replication factor C large subunit.